Consider the following 70-residue polypeptide: ATP synthase subunit c (70 aa).

2 helical membrane-spanning segments follow: residues 5 to 25 (AAAI…GLIV) and 47 to 67 (FIGV…AFMV).

It belongs to the ATPase C chain family. F-type ATPases have 2 components, F(1) - the catalytic core - and F(0) - the membrane proton channel. F(1) has five subunits: alpha(3), beta(3), gamma(1), delta(1), epsilon(1). F(0) has three main subunits: a(1), b(2) and c(10-14). The alpha and beta chains form an alternating ring which encloses part of the gamma chain. F(1) is attached to F(0) by a central stalk formed by the gamma and epsilon chains, while a peripheral stalk is formed by the delta and b chains.

The protein resides in the cell membrane. F(1)F(0) ATP synthase produces ATP from ADP in the presence of a proton or sodium gradient. F-type ATPases consist of two structural domains, F(1) containing the extramembraneous catalytic core and F(0) containing the membrane proton channel, linked together by a central stalk and a peripheral stalk. During catalysis, ATP synthesis in the catalytic domain of F(1) is coupled via a rotary mechanism of the central stalk subunits to proton translocation. Functionally, key component of the F(0) channel; it plays a direct role in translocation across the membrane. A homomeric c-ring of between 10-14 subunits forms the central stalk rotor element with the F(1) delta and epsilon subunits. In Anoxybacillus flavithermus (strain DSM 21510 / WK1), this protein is ATP synthase subunit c.